Consider the following 361-residue polypeptide: Probable purine permease 13 (361 aa).

10 helical membrane-spanning segments follow: residues 35 to 55, 68 to 88, 103 to 123, 129 to 151, 156 to 176, 192 to 212, 238 to 258, 268 to 288, 289 to 309, and 323 to 343; these read WILVFISIFFLISAQAIAVLL, WISTLVQTCGFPILYLPLCFL, LVWIYLSLGFAIGLDNLLYSF, SASTYSILCSSQLAFNGVFSYYI, ITCLILFSVLFLSVSAVLVSL, LIGCLCTVFASLIYSLQLSLM, VASCVAVIGLFASGEWMLLSV, VIYVLTLVGTAVSWQLGSVGA, VALIFLVSSLFSNLIGTLSLI, and LTEVKMVAMLIAFMGFGFYIY.

This sequence belongs to the purine permeases (TC 2.A.7.14) family.

The protein localises to the membrane. The polypeptide is Probable purine permease 13 (PUP13) (Arabidopsis thaliana (Mouse-ear cress)).